Reading from the N-terminus, the 65-residue chain is Venom protein Vn4.6 (65 aa).

An N-terminal signal peptide occupies residues 1–23 (MSKIILAIFLIVLCGLIFVTVDA).

In terms of processing, contains 2 disulfide bonds. As to expression, expressed by the venom gland.

Its subcellular location is the secreted. Functionally, endoparasitoid venom protein that interferes with the activation of host hemolymph prophenoloxidase. May act in conjunction with other venom proteins (such as Vn50), by competitive binding to the zymogen and thereby interrupting the enzyme. The sequence is that of Venom protein Vn4.6 from Cotesia rubecula (Cabbage white butterfly parasite).